Here is a 1135-residue protein sequence, read N- to C-terminus: Envelopment polyprotein (1135 aa).

The signal sequence occupies residues 1 to 35 (MRILKLLELVVKVSLFTIALSSVLLAFLIFRATDA). Topologically, residues 36–314 (KVEIIRGDHP…KYSKSIYKQT (279 aa)) are lumenal. The short motif at 41–43 (RGD) is the Cell attachment site element. 2 disulfides stabilise this stretch: Cys114–Cys145 and Cys122–Cys156. The N-linked (GlcNAc...) asparagine; by host glycan is linked to Asn116. The segment at 177 to 195 (LDNKRHFSVGTKFFISESL) is non-covalent dimerization. Asn210 carries an N-linked (GlcNAc...) asparagine; by host glycan. The cysteines at positions 224 and 285 are disulfide-linked. Residues 315 to 366 (ACINFSWIRLILIALLIYFPIRWLVNKTTKPLFLWYDLIGLITYPILLLINC) traverse the membrane as a helical segment. Over 367–484 (LWKYFPFKCS…VPGCPFLVTS (118 aa)) the chain is Cytoplasmic. Residues 437–484 (LSFSLLKFVTEILIGLIILSQMPMSMAQTTQCLSGCFYVPGCPFLVTS) are signal for signal peptide peptidase. At 485-1067 (KFEKCPERDQ…YFGSFFDTIR (583 aa)) the chain is on the lumenal side. Residues Asn588, Asn605, and Asn980 are each glycosylated (N-linked (GlcNAc...) asparagine; by host). A helical membrane pass occupies residues 1068–1088 (VILLIAFIFLVIYFCSILTTI). At 1089-1135 (CKGYVKNESYKSRSKIEDDDDSEIKAPMLMKDTMTRRRPPMDFSHLV) the chain is on the cytoplasmic side.

The protein belongs to the tospovirus envelope glycoprotein family. In terms of assembly, homodimer; disulfide-linked. Heterodimer with Glycoprotein C. Interacts with nucleoprotein. As to quaternary structure, heterodimer with Glycoprotein N. Interacts with nucleoprotein. In terms of processing, specific enzymatic cleavages in vivo yield mature proteins including Glycoprotein N and Glycoprotein C. Post-translationally, glycosylated with O-linked glycans. Glycosylation is essential for proper subcellular location. Cleaved at acidic pH.

It is found in the virion membrane. It localises to the host Golgi apparatus membrane. The protein localises to the host endoplasmic reticulum membrane. Forms the spikes present at the surface of the virion together with Glycoprotein C. They are able to attach the virion to a cell receptor and to promote fusion of membranes after endocytosis of the virion. Plays a role in virus binding and/or entry into the vector midgut. In terms of biological role, forms the spikes present at the surface of the virion together with Glycoprotein N. They are able to attach the virion to a cell receptor and to promote fusion of membranes after endocytosis of the virion. Probable class II fusion protein. In Tomato spotted wilt virus (strain Regular2A) (TSWV), this protein is Envelopment polyprotein (GP).